The primary structure comprises 180 residues: ATP synthase subunit delta (180 aa).

This sequence belongs to the ATPase delta chain family. F-type ATPases have 2 components, F(1) - the catalytic core - and F(0) - the membrane proton channel. F(1) has five subunits: alpha(3), beta(3), gamma(1), delta(1), epsilon(1). F(0) has three main subunits: a(1), b(2) and c(10-14). The alpha and beta chains form an alternating ring which encloses part of the gamma chain. F(1) is attached to F(0) by a central stalk formed by the gamma and epsilon chains, while a peripheral stalk is formed by the delta and b chains.

It is found in the cell membrane. Functionally, f(1)F(0) ATP synthase produces ATP from ADP in the presence of a proton or sodium gradient. F-type ATPases consist of two structural domains, F(1) containing the extramembraneous catalytic core and F(0) containing the membrane proton channel, linked together by a central stalk and a peripheral stalk. During catalysis, ATP synthesis in the catalytic domain of F(1) is coupled via a rotary mechanism of the central stalk subunits to proton translocation. Its function is as follows. This protein is part of the stalk that links CF(0) to CF(1). It either transmits conformational changes from CF(0) to CF(1) or is implicated in proton conduction. The sequence is that of ATP synthase subunit delta from Alkaliphilus metalliredigens (strain QYMF).